The primary structure comprises 541 residues: Cytochrome P450 monooxygenase claU (541 aa).

A helical transmembrane segment spans residues 12–32 (VIDTLVILFSTWAFLGLIRVI). C480 contacts heme.

The protein belongs to the cytochrome P450 family. Heme is required as a cofactor.

The protein resides in the membrane. It functions in the pathway secondary metabolite biosynthesis; terpenoid biosynthesis. Functionally, cytochrome P450 monooxygenase; part of the gene cluster that mediates the biosynthesis of clavilactone A, a meroterpenoid that features a unique benzo-fused ten-membered carbocyclic ring unit with an alpha,beta-epoxy-gamma-lactone moiety, forming an intriguing 10/5/3 tricyclic nested skeleton. Cytochrome P450 monooxygenases claO, claP, claQ, claU, and claW are close orthologs, suggesting that a redundant function or pseudogenes are present in the cla cluster. These monoxygenases are not involved in clavilactone A biosynthesis nor its modification. ClaR, ClaS and ClaT are sufficient to produce clavilactone A. The biosynthesis begins with the prenyltransferase claS that transfers geranyl pyrophosphate (GPP) to hydroquinone to produces geranylhydroquinone. The cytochrome P450 monooxygenase claR then catalyzes the diradical coupling reaction between the intramolecular hydroquinone and allyl moieties to form the benzo-fused ten-membered carbocyclic ring unit of wigantol. Finally the cytochrome P450 monooxygenase claT exquisitely and stereoselectively assembles the alpha,beta-epoxy-gamma-lactone moiety, producing clavilactone A via arnebinol A. This chain is Cytochrome P450 monooxygenase claU, found in Ampulloclitocybe clavipes (Club foot).